A 190-amino-acid polypeptide reads, in one-letter code: uncharacterized protein (190 aa).

The N-terminal stretch at 1-28 is a signal peptide; it reads MEFSLQYITIFIFVILFLIGLFSSKSRS.

This is an uncharacterized protein from Haemophilus influenzae (strain ATCC 51907 / DSM 11121 / KW20 / Rd).